Here is a 249-residue protein sequence, read N- to C-terminus: Zinc finger AN1 and C2H2 domain-containing stress-associated protein 13 (249 aa).

AN1-type zinc fingers lie at residues 7–55 and 95–145; these read PDLG…RGDV and AVKK…KPES. Residues C13, C18, C28, C31, C36, H39, H45, C47, C101, C106, C118, C121, C126, H129, H135, and C137 each contribute to the Zn(2+) site. The interval 194-213 is disordered; it reads FASGNDGNSEKTQERNGKQN. Residues 201–210 are compositionally biased toward basic and acidic residues; the sequence is NSEKTQERNG. The C2H2-type zinc-finger motif lies at 220–243; the sequence is DVCPKCSRGFRDPVDLLKHIDKDH.

Its function is as follows. May be involved in environmental stress response. The polypeptide is Zinc finger AN1 and C2H2 domain-containing stress-associated protein 13 (SAP13) (Arabidopsis thaliana (Mouse-ear cress)).